A 361-amino-acid chain; its full sequence is 45 kDa calcium-binding protein (361 aa).

Residues 1 to 35 (MVWLVAMTSRQRSLCGLAAHGLWFLGLVLLMDATA) form the signal peptide. N39 is a glycosylation site (N-linked (GlcNAc...) asparagine). EF-hand domains are found at residues 97 to 132 (RSRR…KTAE) and 136 to 171 (EAVK…SKGH). S98 is subject to Phosphoserine. Ca(2+)-binding residues include D110, N112, D114, R116, E121, D149, D151, D153, H155, and E160. T192 bears the Phosphothreonine mark. 4 consecutive EF-hand domains span residues 196–231 (LGNL…HSRG), 232–267 (MLKF…TVEN), 277–312 (WVKD…MNEY), and 313–348 (NALN…FTGS). Ca(2+) is bound at residue D212. Position 216 is a phosphothreonine (T216). 6 residues coordinate Ca(2+): E219, D245, D247, D249, Q251, and E256. Phosphothreonine is present on T264. 3 residues coordinate Ca(2+): D290, N292, and D294. The residue at position 298 (T298) is a Phosphothreonine. Positions 301, 326, 328, 330, 332, and 337 each coordinate Ca(2+). Residues 308–361 (PMNEYNALNEAKQMIAIADENQNHHLEPEEILKYSEFFTGSKLMDYARNVHEEF) form a necessary for intracellular retention in Golgi apparatus lumen region.

The protein belongs to the CREC family. As to quaternary structure, a membrane-associated isoform interacts with STX3 and STXBP1. In terms of tissue distribution, a membrane-associated isoform is expressed in acini of the pancreas (at protein level). Ubiquitous.

Its subcellular location is the golgi apparatus lumen. Functionally, a membrane-associated isoform may be involved in the exocytosis of zymogens by pancreatic acini. May regulate calcium-dependent activities in the endoplasmic reticulum lumen or post-ER compartment. The protein is 45 kDa calcium-binding protein (Sdf4) of Rattus norvegicus (Rat).